Reading from the N-terminus, the 336-residue chain is tRNA-dihydrouridine(20/20a) synthase (336 aa).

Residues 24 to 26 (PMM) and Gln-77 each bind FMN. Cys-107 (proton donor) is an active-site residue. FMN is bound by residues Lys-146, His-178, 218-220 (NGG), and 240-241 (GR).

Belongs to the Dus family. DusA subfamily. Requires FMN as cofactor.

The enzyme catalyses 5,6-dihydrouridine(20) in tRNA + NADP(+) = uridine(20) in tRNA + NADPH + H(+). It catalyses the reaction 5,6-dihydrouridine(20) in tRNA + NAD(+) = uridine(20) in tRNA + NADH + H(+). It carries out the reaction 5,6-dihydrouridine(20a) in tRNA + NADP(+) = uridine(20a) in tRNA + NADPH + H(+). The catalysed reaction is 5,6-dihydrouridine(20a) in tRNA + NAD(+) = uridine(20a) in tRNA + NADH + H(+). Catalyzes the synthesis of 5,6-dihydrouridine (D), a modified base found in the D-loop of most tRNAs, via the reduction of the C5-C6 double bond in target uridines. Specifically modifies U20 and U20a in tRNAs. The chain is tRNA-dihydrouridine(20/20a) synthase from Pseudomonas syringae pv. tomato (strain ATCC BAA-871 / DC3000).